We begin with the raw amino-acid sequence, 208 residues long: 3-demethoxyubiquinol 3-hydroxylase (208 aa).

Residues glutamate 57, glutamate 87, histidine 90, glutamate 139, glutamate 171, and histidine 174 each contribute to the Fe cation site.

Belongs to the COQ7 family. It depends on Fe cation as a cofactor.

It localises to the cell membrane. The catalysed reaction is a 5-methoxy-2-methyl-3-(all-trans-polyprenyl)benzene-1,4-diol + AH2 + O2 = a 3-demethylubiquinol + A + H2O. It participates in cofactor biosynthesis; ubiquinone biosynthesis. Catalyzes the hydroxylation of 2-nonaprenyl-3-methyl-6-methoxy-1,4-benzoquinol during ubiquinone biosynthesis. This Burkholderia pseudomallei (strain 668) protein is 3-demethoxyubiquinol 3-hydroxylase.